A 415-amino-acid polypeptide reads, in one-letter code: Serine hydroxymethyltransferase (415 aa).

Residues L117 and 121-123 contribute to the (6S)-5,6,7,8-tetrahydrofolate site; that span reads GHL. K226 carries the N6-(pyridoxal phosphate)lysine modification. Residue E241 coordinates (6S)-5,6,7,8-tetrahydrofolate.

The protein belongs to the SHMT family. In terms of assembly, homodimer. Pyridoxal 5'-phosphate serves as cofactor.

The protein localises to the cytoplasm. The enzyme catalyses (6R)-5,10-methylene-5,6,7,8-tetrahydrofolate + glycine + H2O = (6S)-5,6,7,8-tetrahydrofolate + L-serine. It participates in one-carbon metabolism; tetrahydrofolate interconversion. The protein operates within amino-acid biosynthesis; glycine biosynthesis; glycine from L-serine: step 1/1. Functionally, catalyzes the reversible interconversion of serine and glycine with tetrahydrofolate (THF) serving as the one-carbon carrier. This reaction serves as the major source of one-carbon groups required for the biosynthesis of purines, thymidylate, methionine, and other important biomolecules. Also exhibits THF-independent aldolase activity toward beta-hydroxyamino acids, producing glycine and aldehydes, via a retro-aldol mechanism. The chain is Serine hydroxymethyltransferase from Bacillus velezensis (strain DSM 23117 / BGSC 10A6 / LMG 26770 / FZB42) (Bacillus amyloliquefaciens subsp. plantarum).